Reading from the N-terminus, the 174-residue chain is Histone deacetylase complex subunit SAP30 homolog (174 aa).

An Atypical zinc finger spans residues 22–70; it reads CCLLDDGERCRKQAGNASYSKRIQKTVTQRRLKLSIDSHARHIYICDFH.

It belongs to the SAP30 family. As to quaternary structure, component of the class 1 Sin3-histone deacetylase complex (HDAC).

The protein resides in the nucleus. Functionally, required for the function of the class 1 Sin3-histone deacetylase complex (HDAC). The polypeptide is Histone deacetylase complex subunit SAP30 homolog (Anopheles gambiae (African malaria mosquito)).